A 228-amino-acid chain; its full sequence is Ion-translocating oxidoreductase complex subunit G (228 aa).

A helical transmembrane segment spans residues 35 to 55 (ALSLGLVCALVAVALLLGNQL). Thr197 carries the post-translational modification FMN phosphoryl threonine.

This sequence belongs to the RnfG family. As to quaternary structure, the complex is composed of six subunits: RnfA, RnfB, RnfC, RnfD, RnfE and RnfG. It depends on FMN as a cofactor.

The protein resides in the cell inner membrane. Functionally, part of a membrane-bound complex that couples electron transfer with translocation of ions across the membrane. This Stutzerimonas stutzeri (Pseudomonas stutzeri) protein is Ion-translocating oxidoreductase complex subunit G.